The primary structure comprises 233 residues: Nickel import system ATP-binding protein NikE (233 aa).

Residues 2-228 (IELKHVTFGY…DRHPYTKELV (227 aa)) form the ABC transporter domain. 35–42 (GESGCGKS) contributes to the ATP binding site.

The protein belongs to the ABC transporter superfamily. The complex is composed of two ATP-binding proteins (NikD and NikE), two transmembrane proteins (NikB and NikC) and a solute-binding protein (NikA).

The protein resides in the cell membrane. It catalyses the reaction Ni(2+)(out) + ATP + H2O = Ni(2+)(in) + ADP + phosphate + H(+). Functionally, part of the ABC transporter complex NikABCDE (Opp2) involved in nickel import. Probably responsible for energy coupling to the transport system. The sequence is that of Nickel import system ATP-binding protein NikE from Staphylococcus aureus (strain MRSA252).